A 103-amino-acid chain; its full sequence is Large ribosomal subunit protein bL21 (103 aa).

It belongs to the bacterial ribosomal protein bL21 family. Part of the 50S ribosomal subunit. Contacts protein L20.

In terms of biological role, this protein binds to 23S rRNA in the presence of protein L20. This Polynucleobacter necessarius subsp. necessarius (strain STIR1) protein is Large ribosomal subunit protein bL21.